Here is a 79-residue protein sequence, read N- to C-terminus: Gas vesicle protein A2 (79 aa).

The alpha helix 1 stretch occupies residues L9–K19. The tract at residues V23–L31 is beta-strand 1. Residues V32 to I34 are beta turn. Positions E35–V43 are beta-strand 2. The alpha helix 2 stretch occupies residues V48 to T67.

The protein belongs to the gas vesicle GvpA family. In terms of assembly, the gas vesicle shell is 2 nm thick and consists of a single layer of this protein. It forms helical ribs nearly perpendicular to the long axis of the vesicle.

Its subcellular location is the gas vesicle shell. Its function is as follows. Gas vesicles are hollow, gas filled proteinaceous nanostructures found in several microbial planktonic microorganisms. They allow positioning of halobacteria at the optimal depth for growth in the poorly aerated shallow brine pools of their habitat. GvpA forms the gas vesicle shell. This protein can replace the p-gvpA gene in the p-vac locus and increases the critical collapse pressure (CCP) of hybrid gas vesicles from 0.66 MPa to 0.90 MPa. In stationary phase gas vesicles about 30 times more GvpA1 is found than GvpA2. Expression of 2 c-vac DNA fragments containing 2 divergently transcribed regions (gvpE-gvpF-gvpG-gvpH-gvpI-gvpJ-gvpK-gvpL-gvpM and gvpA-gvpC-gvpN-gvpO) allows H.volcanii to produce gas vesicles. All site-directed mutagenesis is tested in H.volcanii. The protein is Gas vesicle protein A2 of Halobacterium salinarum (strain ATCC 700922 / JCM 11081 / NRC-1) (Halobacterium halobium).